Reading from the N-terminus, the 257-residue chain is High affinity immunoglobulin epsilon receptor subunit alpha (257 aa).

An N-terminal signal peptide occupies residues 1-25; it reads MAPAMESPTLLCVALLFFAPDGVLA. The Extracellular portion of the chain corresponds to 26–205; the sequence is VPQKPKVSLN…KAPREKYWLQ (180 aa). 2 Ig-like domains span residues 30-110 and 111-193; these read PKVS…EVFS and DWLL…LNIT. Residues Asn-46, Asn-67, Asn-75, Asn-99, Asn-160, Asn-165, and Asn-191 are each glycosylated (N-linked (GlcNAc...) asparagine). Residues Cys-51 and Cys-93 are joined by a disulfide bond. An intrachain disulfide couples Cys-132 to Cys-176. Residues 206–224 form a helical membrane-spanning segment; sequence FFIPLLVVILFAVDTGLFI. The Cytoplasmic portion of the chain corresponds to 225 to 257; that stretch reads STQQQVTFLLKIKRTRKGFRLLNPHPKPNPKNN.

As to quaternary structure, tetramer of an alpha chain, a beta chain, and two disulfide linked gamma chains. Interacts with IGHE (via CH3 region). In terms of tissue distribution, expressed in eosinophils.

It is found in the cell membrane. Its function is as follows. High-affinity receptor for immunoglobulin epsilon/IgE. Mediates IgE effector functions in myeloid cells. Upon IgE binding and antigen/allergen cross-linking initiates signaling pathways that lead to myeloid cell activation and differentiation. On mast cells, basophils and eosinophils stimulates the secretion of vasoactive amines, lipid mediators and cytokines that contribute to inflammatory response, tissue remodeling and cytotoxicity against microbes. Triggers the immediate hypersensitivity response to allergens as a host defense mechanism against helminth parasites, pathogenic bacteria and venom toxicity. When dysregulated, it can elicit harmful life-threatening allergic and anaphylactic reactions. The chain is High affinity immunoglobulin epsilon receptor subunit alpha (FCER1A) from Homo sapiens (Human).